A 977-amino-acid chain; its full sequence is Vacuolar protein sorting-associated protein 54 (977 aa).

Ser-8 is modified (phosphoserine). Residues 239–261 (HELQDYLKKTTQAVKMLRDKIAQ) are a coiled coil. Residues 528–573 (ASAAVDTTSQRNTSPHSEPCSSDSVSEPECTTDSSSSKEQTSACAP) are disordered. Polar residues predominate over residues 532-570 (VDTTSQRNTSPHSEPCSSDSVSEPECTTDSSSSKEQTSA).

It belongs to the VPS54 family. Component of the Golgi-associated retrograde protein (GARP) complex, also called VFT (VPS fifty-three) complex, composed of VPS51, VPS52, VPS53 and VPS54. EIPR1 interacts with GARP complex and mediates its recruitment to the trans-Golgi network. Interacts with VPS51 in an EIPR1-independent manner.

Its subcellular location is the golgi apparatus. It localises to the trans-Golgi network. The protein localises to the membrane. In terms of biological role, acts as a component of the GARP complex that is involved in retrograde transport from early and late endosomes to the trans-Golgi network (TGN). The GARP complex is required for the maintenance of the cycling of mannose 6-phosphate receptors between the TGN and endosomes, this cycling is necessary for proper lysosomal sorting of acid hydrolases such as CTSD. Within the GARP complex, required to tether the complex to the TGN. Not involved in endocytic recycling. This chain is Vacuolar protein sorting-associated protein 54 (Vps54), found in Mus musculus (Mouse).